A 228-amino-acid chain; its full sequence is Phosphoglycolate phosphatase (228 aa).

The active-site Nucleophile is D9. The Mg(2+) site is built by D9 and D11. K151 serves as a coordination point for substrate. Mg(2+) is bound by residues D174 and D178.

This sequence belongs to the archaeal SPP-like hydrolase family. The cofactor is Mg(2+).

The catalysed reaction is 2-phosphoglycolate + H2O = glycolate + phosphate. Catalyzes the dephosphorylation of 2-phosphoglycolate. This Pyrobaculum aerophilum (strain ATCC 51768 / DSM 7523 / JCM 9630 / CIP 104966 / NBRC 100827 / IM2) protein is Phosphoglycolate phosphatase.